Consider the following 54-residue polypeptide: Large ribosomal subunit protein eL37 (54 aa).

Zn(2+)-binding residues include cysteine 20, cysteine 23, cysteine 35, and cysteine 38. The C4-type zinc finger occupies cysteine 20–cysteine 38.

Belongs to the eukaryotic ribosomal protein eL37 family. Zn(2+) serves as cofactor.

In terms of biological role, binds to the 23S rRNA. In Thermoplasma volcanium (strain ATCC 51530 / DSM 4299 / JCM 9571 / NBRC 15438 / GSS1), this protein is Large ribosomal subunit protein eL37 (rpl37e).